Reading from the N-terminus, the 236-residue chain is Small ribosomal subunit protein uS2c (236 aa).

This sequence belongs to the universal ribosomal protein uS2 family.

It is found in the plastid. The protein localises to the chloroplast. The protein is Small ribosomal subunit protein uS2c (rps2) of Liriodendron tulipifera (Tuliptree).